The chain runs to 122 residues: Large ribosomal subunit protein uL14 (122 aa).

It belongs to the universal ribosomal protein uL14 family. Part of the 50S ribosomal subunit. Forms a cluster with proteins L3 and L19. In the 70S ribosome, L14 and L19 interact and together make contacts with the 16S rRNA in bridges B5 and B8.

Functionally, binds to 23S rRNA. Forms part of two intersubunit bridges in the 70S ribosome. The sequence is that of Large ribosomal subunit protein uL14 from Methylobacterium radiotolerans (strain ATCC 27329 / DSM 1819 / JCM 2831 / NBRC 15690 / NCIMB 10815 / 0-1).